Here is a 407-residue protein sequence, read N- to C-terminus: Probable tRNA sulfurtransferase (407 aa).

The region spanning 61–165 (NEITYRLSKI…LDAIYMYEEV (105 aa)) is the THUMP domain. Residues 183-184 (ML), 208-209 (HF), Arg-265, Gly-287, and Gln-296 contribute to the ATP site.

Belongs to the ThiI family.

It is found in the cytoplasm. The enzyme catalyses [ThiI sulfur-carrier protein]-S-sulfanyl-L-cysteine + a uridine in tRNA + 2 reduced [2Fe-2S]-[ferredoxin] + ATP + H(+) = [ThiI sulfur-carrier protein]-L-cysteine + a 4-thiouridine in tRNA + 2 oxidized [2Fe-2S]-[ferredoxin] + AMP + diphosphate. It carries out the reaction [ThiS sulfur-carrier protein]-C-terminal Gly-Gly-AMP + S-sulfanyl-L-cysteinyl-[cysteine desulfurase] + AH2 = [ThiS sulfur-carrier protein]-C-terminal-Gly-aminoethanethioate + L-cysteinyl-[cysteine desulfurase] + A + AMP + 2 H(+). Its pathway is cofactor biosynthesis; thiamine diphosphate biosynthesis. Functionally, catalyzes the ATP-dependent transfer of a sulfur to tRNA to produce 4-thiouridine in position 8 of tRNAs, which functions as a near-UV photosensor. Also catalyzes the transfer of sulfur to the sulfur carrier protein ThiS, forming ThiS-thiocarboxylate. This is a step in the synthesis of thiazole, in the thiamine biosynthesis pathway. The sulfur is donated as persulfide by IscS. The chain is Probable tRNA sulfurtransferase from Staphylococcus aureus (strain bovine RF122 / ET3-1).